The primary structure comprises 569 residues: Urease subunit alpha (569 aa).

One can recognise a Urease domain in the interval 131-569 (GSIDTHIHFI…VPMAQRYFLL (439 aa)). His136, His138, and Lys219 together coordinate Ni(2+). Lys219 carries the N6-carboxylysine modification. His221 contributes to the substrate binding site. Ni(2+) contacts are provided by His248 and His274. His322 acts as the Proton donor in catalysis. Asp362 serves as a coordination point for Ni(2+).

The protein belongs to the metallo-dependent hydrolases superfamily. Urease alpha subunit family. Heterotrimer of UreA (gamma), UreB (beta) and UreC (alpha) subunits. Three heterotrimers associate to form the active enzyme. It depends on Ni cation as a cofactor. In terms of processing, carboxylation allows a single lysine to coordinate two nickel ions.

It localises to the cytoplasm. It catalyses the reaction urea + 2 H2O + H(+) = hydrogencarbonate + 2 NH4(+). It participates in nitrogen metabolism; urea degradation; CO(2) and NH(3) from urea (urease route): step 1/1. This Prochlorococcus marinus (strain AS9601) protein is Urease subunit alpha.